A 120-amino-acid chain; its full sequence is ATP-dependent Clp protease adapter protein ClpS (120 aa).

Belongs to the ClpS family. Binds to the N-terminal domain of the chaperone ClpA.

In terms of biological role, involved in the modulation of the specificity of the ClpAP-mediated ATP-dependent protein degradation. The protein is ATP-dependent Clp protease adapter protein ClpS of Pseudomonas syringae pv. tomato (strain ATCC BAA-871 / DC3000).